Reading from the N-terminus, the 219-residue chain is Proteasome subunit beta type-9 (219 aa).

The propeptide at methionine 1–glycine 20 is removed in mature form. Threonine 21 acts as the Nucleophile in catalysis. N6-acetyllysine is present on residues lysine 53 and lysine 109.

Belongs to the peptidase T1B family. As to quaternary structure, the 26S proteasome consists of a 20S proteasome core and two 19S regulatory subunits. The 20S proteasome core is composed of 28 subunits that are arranged in four stacked rings, resulting in a barrel-shaped structure. The two end rings are each formed by seven alpha subunits, and the two central rings are each formed by seven beta subunits. The catalytic chamber with the active sites is on the inside of the barrel. Component of the immunoproteasome, where it displaces the equivalent housekeeping subunit PSMB6. Component of the spermatoproteasome, a form of the proteasome specifically found in testis. In terms of processing, autocleaved. The resulting N-terminal Thr residue of the mature subunit is responsible for the nucleophile proteolytic activity.

It is found in the cytoplasm. It localises to the nucleus. It catalyses the reaction Cleavage of peptide bonds with very broad specificity.. In terms of biological role, the proteasome is a multicatalytic proteinase complex which is characterized by its ability to cleave peptides with Arg, Phe, Tyr, Leu, and Glu adjacent to the leaving group at neutral or slightly basic pH. The proteasome has an ATP-dependent proteolytic activity. This subunit is involved in antigen processing to generate class I binding peptides. The chain is Proteasome subunit beta type-9 (Psmb9) from Mus terricolor (Earth-colored mouse).